The sequence spans 421 residues: Enolase 1 (421 aa).

Gln164 is a (2R)-2-phosphoglycerate binding site. Glu206 acts as the Proton donor in catalysis. Residues Asp243, Glu287, and Asp314 each coordinate Mg(2+). Lys339, Arg368, Ser369, and Lys390 together coordinate (2R)-2-phosphoglycerate. Residue Lys339 is the Proton acceptor of the active site.

It belongs to the enolase family. Component of the RNA degradosome, a multiprotein complex involved in RNA processing and mRNA degradation. Requires Mg(2+) as cofactor.

Its subcellular location is the cytoplasm. It is found in the secreted. The protein localises to the cell surface. It catalyses the reaction (2R)-2-phosphoglycerate = phosphoenolpyruvate + H2O. It functions in the pathway carbohydrate degradation; glycolysis; pyruvate from D-glyceraldehyde 3-phosphate: step 4/5. Functionally, catalyzes the reversible conversion of 2-phosphoglycerate (2-PG) into phosphoenolpyruvate (PEP). It is essential for the degradation of carbohydrates via glycolysis. The sequence is that of Enolase 1 from Methylococcus capsulatus (strain ATCC 33009 / NCIMB 11132 / Bath).